Reading from the N-terminus, the 489-residue chain is MITLRNISFSYNGTKENNLCDISLHIPKGQCVLLCGASGCGKTTLTRLINGLIPHFFEGEFSGEAIINGMNSEEADIAQLSDSVGTVFQNPRTQFFNTDTDSEIVFGLENRGLPPEQLLSRLEKVTEDLQIQNLRERSIFELSGGEKQKIAFASVYAAAPDIFVLDEPSSNMDYHSIKELSELIKKIKLQGKTIIIAEHRIWYLMDIADRVIFMENGKIAHDMDIKTFVDLPEAQIKSMKLRCRNLADVKAETVNVSPDVSVSFGGHTFAVKDITVKLGHTSVLQDISFSTTGGEIIAITGENGAGKTTLARTLCGLTQEAAGSISFDGNPLSRKMRRERSYMVMQDVGHQLFTDSVYAECRLGIKDLPDPAIDEVLTELSLNRLKERHPLSLSGGQKQRLAVAVSVLCGKDILIFDEPTSGLDLKSMQEAGRIIKRLADDKKTVIVITHDIEFIKTICSRVLILSGGKIVKELCGEKKNELEMQLETF.

ABC transporter domains lie at 2–241 and 269–487; these read ITLR…SMKL and FAVK…MQLE. ATP contacts are provided by residues 36–43 and 301–308; these read GASGCGKT and GENGAGKT.

It belongs to the ABC transporter superfamily.

The protein localises to the cell inner membrane. Its function is as follows. Probably part of an ABC transporter complex. Responsible for energy coupling to the transport system. The sequence is that of Putative ABC transporter ATP-binding protein TDE_0282 from Treponema denticola (strain ATCC 35405 / DSM 14222 / CIP 103919 / JCM 8153 / KCTC 15104).